Reading from the N-terminus, the 1405-residue chain is DNA-directed RNA polymerase subunit beta' (1405 aa).

Positions 70, 72, 85, and 88 each coordinate Zn(2+). Residues D460, D462, and D464 each contribute to the Mg(2+) site. The Zn(2+) site is built by C814, C888, C895, and C898.

Belongs to the RNA polymerase beta' chain family. The RNAP catalytic core consists of 2 alpha, 1 beta, 1 beta' and 1 omega subunit. When a sigma factor is associated with the core the holoenzyme is formed, which can initiate transcription. Mg(2+) serves as cofactor. Zn(2+) is required as a cofactor.

The catalysed reaction is RNA(n) + a ribonucleoside 5'-triphosphate = RNA(n+1) + diphosphate. In terms of biological role, DNA-dependent RNA polymerase catalyzes the transcription of DNA into RNA using the four ribonucleoside triphosphates as substrates. The chain is DNA-directed RNA polymerase subunit beta' from Shewanella sp. (strain MR-7).